A 285-amino-acid polypeptide reads, in one-letter code: NAD kinase (285 aa).

Residue aspartate 66 is the Proton acceptor of the active site. Residues 66–67 (DG), 137–138 (ND), arginine 148, arginine 165, aspartate 167, and 178–183 (TAYSMS) contribute to the NAD(+) site.

This sequence belongs to the NAD kinase family. The cofactor is a divalent metal cation.

The protein resides in the cytoplasm. The enzyme catalyses NAD(+) + ATP = ADP + NADP(+) + H(+). In terms of biological role, involved in the regulation of the intracellular balance of NAD and NADP, and is a key enzyme in the biosynthesis of NADP. Catalyzes specifically the phosphorylation on 2'-hydroxyl of the adenosine moiety of NAD to yield NADP. The polypeptide is NAD kinase (Chlorobium luteolum (strain DSM 273 / BCRC 81028 / 2530) (Pelodictyon luteolum)).